The primary structure comprises 452 residues: UPF0210 protein Ccel_1722 (452 aa).

The protein belongs to the UPF0210 family. In terms of assembly, homodimer.

This Ruminiclostridium cellulolyticum (strain ATCC 35319 / DSM 5812 / JCM 6584 / H10) (Clostridium cellulolyticum) protein is UPF0210 protein Ccel_1722.